We begin with the raw amino-acid sequence, 123 residues long: ATP synthase epsilon chain (123 aa).

This sequence belongs to the ATPase epsilon chain family. F-type ATPases have 2 components, CF(1) - the catalytic core - and CF(0) - the membrane proton channel. CF(1) has five subunits: alpha(3), beta(3), gamma(1), delta(1), epsilon(1). CF(0) has three main subunits: a, b and c.

It is found in the cell inner membrane. Functionally, produces ATP from ADP in the presence of a proton gradient across the membrane. This Helicobacter pylori (strain Shi470) protein is ATP synthase epsilon chain.